The chain runs to 55 residues: Large ribosomal subunit protein bL33 (55 aa).

The protein belongs to the bacterial ribosomal protein bL33 family.

The polypeptide is Large ribosomal subunit protein bL33 (rpmG) (Buchnera aphidicola subsp. Acyrthosiphon pisum (strain APS) (Acyrthosiphon pisum symbiotic bacterium)).